We begin with the raw amino-acid sequence, 236 residues long: Sugar fermentation stimulation protein homolog (236 aa).

Belongs to the SfsA family.

This Proteus mirabilis (strain HI4320) protein is Sugar fermentation stimulation protein homolog.